Reading from the N-terminus, the 203-residue chain is RNA annealing protein YRA2 (203 aa).

Methionine 1 bears the N-acetylmethionine mark. 2 disordered regions span residues 1–60 (MDKA…REEP) and 137–203 (QPQR…YMKG). Over residues 11-20 (NSHTDSSSNH) the composition is skewed to polar residues. Residues 47 to 60 (SRSKDRLYREREEP) show a composition bias toward basic and acidic residues. The 75-residue stretch at 64–138 (KRIRISKIPL…AKIEVEIYQP (75 aa)) folds into the RRM domain. Basic residues-rich tracts occupy residues 139-153 (QRKHSRMNAHNRRKQ) and 163-180 (PGSHYRQRPNRVSKKNKG).

The protein belongs to the YRA1 family. In terms of assembly, associates with mRNPs. Interacts with YRA1.

It localises to the nucleus. Functionally, involved in export of poly(A) mRNAs from the nucleus. Recruited to the coding sequences as well as poly-A sites of active genes. This chain is RNA annealing protein YRA2 (YRA2), found in Saccharomyces cerevisiae (strain Lalvin EC1118 / Prise de mousse) (Baker's yeast).